Here is a 394-residue protein sequence, read N- to C-terminus: S-adenosylmethionine synthase (394 aa).

Residue His16 coordinates ATP. Residue Asp18 participates in Mg(2+) binding. Glu44 contributes to the K(+) binding site. Glu57 and Gln100 together coordinate L-methionine. The interval 100–110 (QSPDIAQGVDA) is flexible loop. ATP-binding positions include 172 to 174 (DAK), 239 to 240 (RF), Asp248, 254 to 255 (RK), Ala271, and Lys275. L-methionine is bound at residue Asp248. An L-methionine-binding site is contributed by Lys279.

This sequence belongs to the AdoMet synthase family. Homotetramer; dimer of dimers. The cofactor is Mg(2+). K(+) is required as a cofactor.

The protein localises to the cytoplasm. The enzyme catalyses L-methionine + ATP + H2O = S-adenosyl-L-methionine + phosphate + diphosphate. It functions in the pathway amino-acid biosynthesis; S-adenosyl-L-methionine biosynthesis; S-adenosyl-L-methionine from L-methionine: step 1/1. In terms of biological role, catalyzes the formation of S-adenosylmethionine (AdoMet) from methionine and ATP. The overall synthetic reaction is composed of two sequential steps, AdoMet formation and the subsequent tripolyphosphate hydrolysis which occurs prior to release of AdoMet from the enzyme. This Enterococcus faecalis (strain ATCC 700802 / V583) protein is S-adenosylmethionine synthase.